A 289-amino-acid polypeptide reads, in one-letter code: CRISPR system Cms protein Csm4 (289 aa).

The protein belongs to the CRISPR-associated Csm4 family. As to quaternary structure, probably part of the Csm effector complex, that includes Cas10, Csm2, Csm3, Csm4, Csm5 and mature crRNA. Interacts with Cas10 (csm1).

Functionally, CRISPR (clustered regularly interspaced short palindromic repeat) is an adaptive immune system that provides protection against mobile genetic elements (viruses, transposable elements and conjugative plasmids). CRISPR clusters contain spacers, sequences complementary to antecedent mobile elements, and target invading nucleic acids. CRISPR clusters are transcribed and processed into CRISPR RNA (crRNA). The type III-A Csm effector complex binds crRNA and acts as a crRNA-guided RNase, DNase and cyclic oligoadenylate synthase; binding of target RNA cognate to the crRNA is required for all activities. Its function is as follows. The subunit probably binds to the 5' handle of the crRNA, helping in discrimination between self- and non-self. The polypeptide is CRISPR system Cms protein Csm4 (Thermococcus onnurineus (strain NA1)).